Reading from the N-terminus, the 355-residue chain is Uroporphyrinogen decarboxylase (355 aa).

Substrate is bound by residues 27–31 (RQAGR), Phe-46, Asp-78, Tyr-155, Ser-210, and His-328.

This sequence belongs to the uroporphyrinogen decarboxylase family. As to quaternary structure, homodimer.

The protein localises to the cytoplasm. The catalysed reaction is uroporphyrinogen III + 4 H(+) = coproporphyrinogen III + 4 CO2. Its pathway is porphyrin-containing compound metabolism; protoporphyrin-IX biosynthesis; coproporphyrinogen-III from 5-aminolevulinate: step 4/4. Catalyzes the decarboxylation of four acetate groups of uroporphyrinogen-III to yield coproporphyrinogen-III. The polypeptide is Uroporphyrinogen decarboxylase (Pseudomonas aeruginosa (strain ATCC 15692 / DSM 22644 / CIP 104116 / JCM 14847 / LMG 12228 / 1C / PRS 101 / PAO1)).